We begin with the raw amino-acid sequence, 303 residues long: Mevalonate kinase (303 aa).

Position 90–100 (90–100) interacts with ATP; that stretch reads PAGSGLGSSAA. Asp-141 acts as the Proton acceptor in catalysis.

This sequence belongs to the GHMP kinase family. Mevalonate kinase subfamily. As to quaternary structure, homodimer. Requires Mg(2+) as cofactor.

It localises to the cytoplasm. It carries out the reaction (R)-mevalonate + ATP = (R)-5-phosphomevalonate + ADP + H(+). The protein operates within isoprenoid biosynthesis; isopentenyl diphosphate biosynthesis via mevalonate pathway; isopentenyl diphosphate from (R)-mevalonate: step 1/3. Catalyzes the phosphorylation of (R)-mevalonate (MVA) to (R)-mevalonate 5-phosphate (MVAP). Functions in the mevalonate (MVA) pathway leading to isopentenyl diphosphate (IPP), a key precursor for the biosynthesis of isoprenoid compounds such as archaeal membrane lipids. The chain is Mevalonate kinase from Methanothermobacter thermautotrophicus (strain ATCC 29096 / DSM 1053 / JCM 10044 / NBRC 100330 / Delta H) (Methanobacterium thermoautotrophicum).